A 207-amino-acid chain; its full sequence is Superoxide dismutase [Mn] (207 aa).

Residues His-28, His-76, Asp-160, and His-164 each coordinate Mn(2+).

The protein belongs to the iron/manganese superoxide dismutase family. It depends on Mn(2+) as a cofactor.

The catalysed reaction is 2 superoxide + 2 H(+) = H2O2 + O2. Its function is as follows. Destroys superoxide anion radicals which are normally produced within the cells and which are toxic to biological systems. The protein is Superoxide dismutase [Mn] (sodA) of Mycobacterium intracellulare (strain ATCC 13950 / DSM 43223 / JCM 6384 / NCTC 13025 / 3600).